A 142-amino-acid polypeptide reads, in one-letter code: Small heat shock protein IbpB (142 aa).

Positions A26–R137 constitute a sHSP domain.

This sequence belongs to the small heat shock protein (HSP20) family. As to quaternary structure, homodimer. Forms homomultimers of about 100-150 subunits at optimal growth temperatures. Conformation changes to oligomers at high temperatures or high ionic concentrations. The decrease in size of the multimers is accompanied by an increase in chaperone activity.

It localises to the cytoplasm. Functionally, associates with aggregated proteins, together with IbpA, to stabilize and protect them from irreversible denaturation and extensive proteolysis during heat shock and oxidative stress. Aggregated proteins bound to the IbpAB complex are more efficiently refolded and reactivated by the ATP-dependent chaperone systems ClpB and DnaK/DnaJ/GrpE. Its activity is ATP-independent. This chain is Small heat shock protein IbpB, found in Escherichia coli O7:K1 (strain IAI39 / ExPEC).